A 293-amino-acid polypeptide reads, in one-letter code: Movement protein BC1 (293 aa).

It belongs to the begomovirus movement protein BC1 family. As to quaternary structure, binds to dimeric supercoiled plasmid DNA. In terms of processing, phosphorylated.

It localises to the host cell membrane. Its subcellular location is the host microsome membrane. The protein resides in the host endoplasmic reticulum membrane. Its function is as follows. Transports viral genome to neighboring plant cells directly through plasmosdesmata, without any budding. The movement protein allows efficient cell to cell propagation, by bypassing the host cell wall barrier. Begomovirus genome is shuttled out of nucleus by Nuclear shuttle protein (NSP) and the movement protein transports the DNA-NSP complex to cell plasmodesmata and facilitates further movement across the cell wall. The polypeptide is Movement protein BC1 (Cucurbita moschata (Winter crookneck squash)).